Here is a 290-residue protein sequence, read N- to C-terminus: Transmembrane protein 33 homolog (290 aa).

2 disordered regions span residues 1-22 (MSSPKFDSYDWENDPNWKEFTG) and 39-72 (IDPNYKSSNNTTTQRPSTSSSSRTSSSSTSSPRA). Low complexity predominate over residues 45 to 72 (SSNNTTTQRPSTSSSSRTSSSSTSSPRA). Transmembrane regions (helical) follow at residues 83 to 103 (LYGAWVIAQISVILFTLFYFI), 109 to 129 (FFYKALLGATIAYSIPIFNTF), 150 to 170 (FVFYCMIFYFFGSSSLVYLLP), and 218 to 238 (IVLIAFFGIFSSFSNILLVFI).

Belongs to the PER33/POM33 family.

It is found in the membrane. The polypeptide is Transmembrane protein 33 homolog (tmem33) (Dictyostelium discoideum (Social amoeba)).